Consider the following 170-residue polypeptide: Lipoprotein signal peptidase (170 aa).

4 consecutive transmembrane segments (helical) span residues 11 to 31 (LGWL…KLHF), 41 to 61 (IVVI…AAFS), 69 to 89 (WQRW…VVWL), and 95 to 115 (NETW…GNLY). Catalysis depends on residues Asp-125 and Asp-144. A helical transmembrane segment spans residues 136-156 (YFPAFNFADSAITVGAVMLAL).

Belongs to the peptidase A8 family.

The protein resides in the cell inner membrane. The enzyme catalyses Release of signal peptides from bacterial membrane prolipoproteins. Hydrolyzes -Xaa-Yaa-Zaa-|-(S,diacylglyceryl)Cys-, in which Xaa is hydrophobic (preferably Leu), and Yaa (Ala or Ser) and Zaa (Gly or Ala) have small, neutral side chains.. The protein operates within protein modification; lipoprotein biosynthesis (signal peptide cleavage). Its function is as follows. This protein specifically catalyzes the removal of signal peptides from prolipoproteins. This is Lipoprotein signal peptidase from Pseudomonas fluorescens (strain ATCC BAA-477 / NRRL B-23932 / Pf-5).